A 185-amino-acid chain; its full sequence is NOP protein chaperone 1 (185 aa).

The interval 1–40 is disordered; it reads MEVHGKPKASPSCSSPTRDSSGVPVSKELLTAGSDGRGGI. Low complexity predominate over residues 10–21; it reads SPSCSSPTRDSS. Phosphoserine occurs at positions 34 and 66. The disordered stretch occupies residues 118-185; it reads FEMNQSDSKE…LDSPASKKKK (68 aa). Acidic residues predominate over residues 143 to 152; the sequence is SESEDEDDSI. Serine 178 carries the post-translational modification Phosphoserine.

In terms of assembly, interacts with NOP58, RUVBL1 and RUVBL2; the interactions are direct and NOPCHAP1 bridges the association of NOP58 with RUVBL1:RUVBL2 even in absence of snoRNAs. The interactions with RUVBL1 and RUVBL2 are disrupted upon ATP binding.

Its subcellular location is the nucleus. Functionally, client-loading PAQosome/R2TP complex cofactor that selects NOP58 to promote box C/D small nucleolar ribonucleoprotein (snoRNP) assembly. Acts as a bridge between NOP58 and the R2TP complex via RUVBL1:RUVBL2. This Homo sapiens (Human) protein is NOP protein chaperone 1.